A 571-amino-acid chain; its full sequence is Potassium-transporting ATPase potassium-binding subunit (571 aa).

Helical transmembrane passes span Leu-5 to Val-25, Tyr-60 to Leu-80, Val-86 to Val-106, Gly-131 to Ile-151, Ile-177 to Ser-197, Pro-247 to Thr-267, Leu-291 to Ala-311, Phe-334 to Val-354, Gly-386 to Gly-406, Ala-425 to Leu-445, Ala-498 to Ala-518, and Gly-547 to Ala-567.

It belongs to the KdpA family. As to quaternary structure, the system is composed of three essential subunits: KdpA, KdpB and KdpC.

It localises to the cell membrane. Functionally, part of the high-affinity ATP-driven potassium transport (or Kdp) system, which catalyzes the hydrolysis of ATP coupled with the electrogenic transport of potassium into the cytoplasm. This subunit binds the extracellular potassium ions and delivers the ions to the membrane domain of KdpB through an intramembrane tunnel. The protein is Potassium-transporting ATPase potassium-binding subunit of Rhodococcus jostii (strain RHA1).